The sequence spans 265 residues: 1-(5-phosphoribosyl)-5-[(5-phosphoribosylamino)methylideneamino] imidazole-4-carboxamide isomerase (265 aa).

The active-site Proton acceptor is the D8. The active-site Proton donor is D139.

This sequence belongs to the HisA/HisF family.

The protein resides in the cytoplasm. It carries out the reaction 1-(5-phospho-beta-D-ribosyl)-5-[(5-phospho-beta-D-ribosylamino)methylideneamino]imidazole-4-carboxamide = 5-[(5-phospho-1-deoxy-D-ribulos-1-ylimino)methylamino]-1-(5-phospho-beta-D-ribosyl)imidazole-4-carboxamide. It participates in amino-acid biosynthesis; L-histidine biosynthesis; L-histidine from 5-phospho-alpha-D-ribose 1-diphosphate: step 4/9. This chain is 1-(5-phosphoribosyl)-5-[(5-phosphoribosylamino)methylideneamino] imidazole-4-carboxamide isomerase, found in Herminiimonas arsenicoxydans.